A 399-amino-acid polypeptide reads, in one-letter code: DNA replication and repair protein RecF (399 aa).

30–37 (GSNGIGKT) is a binding site for ATP.

It belongs to the RecF family.

It is found in the cytoplasm. Functionally, the RecF protein is involved in DNA metabolism; it is required for DNA replication and normal SOS inducibility. RecF binds preferentially to single-stranded, linear DNA. It also seems to bind ATP. The protein is DNA replication and repair protein RecF of Paenarthrobacter aurescens (strain TC1).